Here is a 371-residue protein sequence, read N- to C-terminus: RxLR effector protein PITG_12731 (371 aa).

Positions 1 to 24 are cleaved as a signal peptide; it reads MRFYSVLLTIVTLIASTYDAKVNA. The RxLR-dEER signature appears at 43-53; it reads RMLRADHADER.

Belongs to the RxLR effector family.

The protein localises to the secreted. It is found in the host nucleus. Its subcellular location is the host cytoplasm. Its function is as follows. Effector that enhances P.infestans colonization of Nicotiana benthamiana leaves. This is RxLR effector protein PITG_12731 from Phytophthora infestans (strain T30-4) (Potato late blight agent).